The following is a 382-amino-acid chain: Na(+)/H(+) antiporter NhaA 2 (382 aa).

10 helical membrane passes run 11 to 31, 45 to 65, 91 to 111, 116 to 136, 145 to 165, 171 to 191, 197 to 214, 287 to 307, 324 to 344, and 353 to 373; these read FSVPLVAGVVVALFWANLDPA, LSFHFISNELFMTLFFGIAAV, LGGVLGPVLVYLGLNALVGLP, GWGIPTATDIALAWLAARMVF, YLLLLAVADDAIGLAIIALFY, PVVAAWLLLTLLGMLVAWGLG, SYWPYILLGGSLSWIGLH, WLVLVSLLVGKTVGIFGFGLL, LLVAGVVAGTGFTVALFVSGS, and AAAKMGAMFSLAAALIGMLLG.

The protein belongs to the NhaA Na(+)/H(+) (TC 2.A.33) antiporter family.

Its subcellular location is the cell inner membrane. The catalysed reaction is Na(+)(in) + 2 H(+)(out) = Na(+)(out) + 2 H(+)(in). Its function is as follows. Na(+)/H(+) antiporter that extrudes sodium in exchange for external protons. This Pelobacter propionicus (strain DSM 2379 / NBRC 103807 / OttBd1) protein is Na(+)/H(+) antiporter NhaA 2.